The primary structure comprises 509 residues: UDP-N-acetylmuramoyl-L-alanyl-D-glutamate--2,6-diaminopimelate ligase (509 aa).

Ser32 lines the UDP-N-acetyl-alpha-D-muramoyl-L-alanyl-D-glutamate pocket. 117–123 (GTNGKTT) contacts ATP. Residues 159 to 160 (TT), Ser186, Gln192, and Arg194 contribute to the UDP-N-acetyl-alpha-D-muramoyl-L-alanyl-D-glutamate site. An N6-carboxylysine modification is found at Lys226. Residues Arg401, 425 to 428 (DNPR), Gly476, and Glu480 each bind meso-2,6-diaminopimelate. Residues 425–428 (DNPR) carry the Meso-diaminopimelate recognition motif motif.

The protein belongs to the MurCDEF family. MurE subfamily. Mg(2+) serves as cofactor. Carboxylation is probably crucial for Mg(2+) binding and, consequently, for the gamma-phosphate positioning of ATP.

The protein resides in the cytoplasm. It carries out the reaction UDP-N-acetyl-alpha-D-muramoyl-L-alanyl-D-glutamate + meso-2,6-diaminopimelate + ATP = UDP-N-acetyl-alpha-D-muramoyl-L-alanyl-gamma-D-glutamyl-meso-2,6-diaminopimelate + ADP + phosphate + H(+). It participates in cell wall biogenesis; peptidoglycan biosynthesis. Catalyzes the addition of meso-diaminopimelic acid to the nucleotide precursor UDP-N-acetylmuramoyl-L-alanyl-D-glutamate (UMAG) in the biosynthesis of bacterial cell-wall peptidoglycan. This chain is UDP-N-acetylmuramoyl-L-alanyl-D-glutamate--2,6-diaminopimelate ligase, found in Prochlorococcus marinus (strain NATL1A).